Reading from the N-terminus, the 152-residue chain is Xanthine-guanine phosphoribosyltransferase (152 aa).

Residues 37 to 38 (RG), R69, and 88 to 96 (DDLVDTGGT) each bind 5-phospho-alpha-D-ribose 1-diphosphate. A GMP-binding site is contributed by R69. D89 is a Mg(2+) binding site. Guanine-binding residues include D92 and I135. D92 and I135 together coordinate xanthine. Residues 92-96 (DTGGT) and 134-135 (WI) each bind GMP.

Belongs to the purine/pyrimidine phosphoribosyltransferase family. XGPT subfamily. Homotetramer. Mg(2+) is required as a cofactor.

Its subcellular location is the cell inner membrane. It carries out the reaction GMP + diphosphate = guanine + 5-phospho-alpha-D-ribose 1-diphosphate. The catalysed reaction is XMP + diphosphate = xanthine + 5-phospho-alpha-D-ribose 1-diphosphate. It catalyses the reaction IMP + diphosphate = hypoxanthine + 5-phospho-alpha-D-ribose 1-diphosphate. It functions in the pathway purine metabolism; GMP biosynthesis via salvage pathway; GMP from guanine: step 1/1. The protein operates within purine metabolism; XMP biosynthesis via salvage pathway; XMP from xanthine: step 1/1. In terms of biological role, purine salvage pathway enzyme that catalyzes the transfer of the ribosyl-5-phosphate group from 5-phospho-alpha-D-ribose 1-diphosphate (PRPP) to the N9 position of the 6-oxopurines guanine and xanthine to form the corresponding ribonucleotides GMP (guanosine 5'-monophosphate) and XMP (xanthosine 5'-monophosphate), with the release of PPi. To a lesser extent, also acts on hypoxanthine. This chain is Xanthine-guanine phosphoribosyltransferase, found in Erwinia tasmaniensis (strain DSM 17950 / CFBP 7177 / CIP 109463 / NCPPB 4357 / Et1/99).